We begin with the raw amino-acid sequence, 226 residues long: MARILRASCLLSLLLAGFVPPGRGQEKSKTDCHGGMSGTIYEYGALTIDGEEYIPFKQYAGKYILFVNVASYUGLTDQYLELNALQEELGPFGLVILGFPCNQFGKQEPGENSEILPSLKYVRPGGGFVPNFQLFEKGDVNGEKEQKFYTFLKNSCPPTAELLGSPGRLFWEPMKIHDIRWNFEKFLVGPDGIPIMRWYHRTTVSNVKMDILSYMRRQAALGARGK.

Residues 1–24 (MARILRASCLLSLLLAGFVPPGRG) form the signal peptide. The active site involves selenocysteine 73. Selenocysteine 73 is a non-standard amino acid (selenocysteine).

The protein belongs to the glutathione peroxidase family. Homotetramer. Secreted in plasma.

Its subcellular location is the secreted. The catalysed reaction is 2 glutathione + H2O2 = glutathione disulfide + 2 H2O. It carries out the reaction tert-butyl hydroperoxide + 2 glutathione = tert-butanol + glutathione disulfide + H2O. Protects cells and enzymes from oxidative damage, by catalyzing the reduction of hydrogen peroxide, lipid peroxides and organic hydroperoxide, by glutathione. This Rattus norvegicus (Rat) protein is Glutathione peroxidase 3.